Here is a 296-residue protein sequence, read N- to C-terminus: Protoheme IX farnesyltransferase 2 (296 aa).

The next 9 helical transmembrane spans lie at 7–27, 36–56, 83–103, 108–128, 134–154, 163–183, 207–227, 229–249, and 265–285; these read LLVA…GGYF, PMLL…GCVL, LKAA…LLWW, LTTA…SLWF, YGTL…YCAV, ASLL…IAIF, IHIV…CLGG, AGYG…AIAL, and FAFS…DFQV.

The protein belongs to the UbiA prenyltransferase family. Protoheme IX farnesyltransferase subfamily.

It localises to the cell inner membrane. The catalysed reaction is heme b + (2E,6E)-farnesyl diphosphate + H2O = Fe(II)-heme o + diphosphate. The protein operates within porphyrin-containing compound metabolism; heme O biosynthesis; heme O from protoheme: step 1/1. In terms of biological role, converts heme B (protoheme IX) to heme O by substitution of the vinyl group on carbon 2 of heme B porphyrin ring with a hydroxyethyl farnesyl side group. The protein is Protoheme IX farnesyltransferase 2 of Pseudomonas aeruginosa (strain UCBPP-PA14).